Consider the following 503-residue polypeptide: Aromatase (503 aa).

2 consecutive transmembrane segments (helical) span residues 19–39 and 303–323; these read EAMPAATMPVLLLTGLFLLVW and MLIAAPDTMSVSLFFMLFLIA. The substrate site is built by Asp-309 and Met-374. Cys-437 lines the heme pocket.

The protein belongs to the cytochrome P450 family. The cofactor is heme. Post-translationally, phosphorylated in vitro by PKA and PKG/PRKG1. These phosphorylations inhibit the catalytic activity as measured by estrone synthesis from androstenedione (36% decrease for PKA and 30% for PKG/PRKG1). In terms of tissue distribution, widely expressed, including in adult and fetal brain, placenta, skin fibroblasts, adipose tissue and gonads.

Its subcellular location is the endoplasmic reticulum membrane. The protein resides in the microsome membrane. The enzyme catalyses testosterone + 3 reduced [NADPH--hemoprotein reductase] + 3 O2 = 17beta-estradiol + formate + 3 oxidized [NADPH--hemoprotein reductase] + 4 H2O + 4 H(+). The catalysed reaction is androst-4-ene-3,17-dione + 3 reduced [NADPH--hemoprotein reductase] + 3 O2 = estrone + formate + 3 oxidized [NADPH--hemoprotein reductase] + 4 H2O + 4 H(+). It catalyses the reaction androst-4-ene-3,17-dione + reduced [NADPH--hemoprotein reductase] + O2 = 19-hydroxyandrost-4-ene-3,17-dione + oxidized [NADPH--hemoprotein reductase] + H2O + H(+). It carries out the reaction 19-hydroxyandrost-4-ene-3,17-dione + reduced [NADPH--hemoprotein reductase] + O2 = 19-oxo-androst-4-ene-3,17-dione + oxidized [NADPH--hemoprotein reductase] + 2 H2O + H(+). The enzyme catalyses 19-oxo-androst-4-ene-3,17-dione + reduced [NADPH--hemoprotein reductase] + O2 = estrone + formate + oxidized [NADPH--hemoprotein reductase] + H2O + 2 H(+). The catalysed reaction is estrone + reduced [NADPH--hemoprotein reductase] + O2 = 2-hydroxyestrone + oxidized [NADPH--hemoprotein reductase] + H2O + H(+). It catalyses the reaction 17beta-hydroxy-5alpha-androstan-3-one + reduced [NADPH--hemoprotein reductase] + O2 = 17beta,19-dihydroxy-3-oxo-5alpha-androstanone + oxidized [NADPH--hemoprotein reductase] + H2O + H(+). It carries out the reaction 17beta,19-dihydroxy-3-oxo-5alpha-androstanone + reduced [NADPH--hemoprotein reductase] + O2 = 17beta-hydroxy-3,19-dioxo-5alpha-androstanone + oxidized [NADPH--hemoprotein reductase] + 2 H2O + H(+). The enzyme catalyses 17beta-hydroxy-3,19-dioxo-5alpha-androstanone + reduced [NADPH--hemoprotein reductase] + O2 = 17beta-hydroxy-3-oxo-19-nor-5alpha-androst-1-ene + formate + oxidized [NADPH--hemoprotein reductase] + H2O + 2 H(+). It participates in steroid hormone biosynthesis. In terms of biological role, a cytochrome P450 monooxygenase that catalyzes the conversion of C19 androgens, androst-4-ene-3,17-dione (androstenedione) and testosterone to the C18 estrogens, estrone and estradiol, respectively. Catalyzes three successive oxidations of C19 androgens: two conventional oxidations at C19 yielding 19-hydroxy and 19-oxo/19-aldehyde derivatives, followed by a third oxidative aromatization step that involves C1-beta hydrogen abstraction combined with cleavage of the C10-C19 bond to yield a phenolic A ring and formic acid. Alternatively, the third oxidative reaction yields a 19-norsteroid and formic acid. Converts dihydrotestosterone to delta1,10-dehydro 19-nordihydrotestosterone and may play a role in homeostasis of this potent androgen. Also displays 2-hydroxylase activity toward estrone. Mechanistically, uses molecular oxygen inserting one oxygen atom into a substrate, and reducing the second into a water molecule, with two electrons provided by NADPH via cytochrome P450 reductase (CPR; NADPH-ferrihemoprotein reductase). The polypeptide is Aromatase (Homo sapiens (Human)).